The primary structure comprises 467 residues: Glutamate--tRNA ligase (467 aa).

The 'HIGH' region signature appears at proline 9–glycine 19. The 'KMSKS' region signature appears at lysine 237–arginine 241. Residue lysine 240 coordinates ATP.

It belongs to the class-I aminoacyl-tRNA synthetase family. Glutamate--tRNA ligase type 1 subfamily. In terms of assembly, monomer.

Its subcellular location is the cytoplasm. It catalyses the reaction tRNA(Glu) + L-glutamate + ATP = L-glutamyl-tRNA(Glu) + AMP + diphosphate. In terms of biological role, catalyzes the attachment of glutamate to tRNA(Glu) in a two-step reaction: glutamate is first activated by ATP to form Glu-AMP and then transferred to the acceptor end of tRNA(Glu). In Stenotrophomonas maltophilia (strain R551-3), this protein is Glutamate--tRNA ligase.